An 892-amino-acid chain; its full sequence is Transmembrane channel-like protein 2-B (892 aa).

Residues 29–125 are disordered; the sequence is GINQNLRREE…DESMSEGEMA (97 aa). Basic residues-rich tracts occupy residues 48-58 and 66-77; these read RRAKKRRMNRR and RSKKMRMRVRKN. The segment covering 103 to 112 has biased composition (low complexity); it reads PSSCSSSSDN. A run of 9 helical transmembrane segments spans residues 235–255, 275–295, 308–328, 403–423, 444–464, 482–502, 616–636, 671–691, and 736–756; these read LVLF…MGIP, FSVL…YGFY, LPLS…MVVI, LANV…YAVV, EVEI…EAIA, IFAL…DEVN, LIFN…LVGI, FYMG…IYSI, and GLII…LNAV. The segment covering 772-785 has biased composition (basic and acidic residues); sequence QMQRDEEKNRRNNK. 2 disordered regions span residues 772 to 791 and 796 to 892; these read QMQR…TNQV and EDLL…PPRR. The segment covering 862–878 has biased composition (pro residues); it reads PRQPGPLPGNPRGPPPG.

Belongs to the TMC family. In terms of tissue distribution, in adults, expression is restricted to the hair cells of inner ear and lateral line organ. Expressed at higher levels in the larval lateral-line neuromasts than in the larval inner ear.

It localises to the membrane. Its function is as follows. Probable component of the mechanotransducer (MET) non-selective cation channel. This Danio rerio (Zebrafish) protein is Transmembrane channel-like protein 2-B.